Consider the following 62-residue polypeptide: uncharacterized protein (62 aa).

Transmembrane regions (helical) follow at residues 7-27 and 34-51; these read LLLL…VFIA and IIAS…GFTL.

Its subcellular location is the cell membrane. This is an uncharacterized protein from Bacillus subtilis (strain 168).